The following is a 1105-amino-acid chain: Integrator complex subunit 2 (1105 aa).

Residues 822–842 form a helical membrane-spanning segment; sequence FVFCSPYLLMILLRILKGSLA.

The protein belongs to the Integrator subunit 2 family. As to quaternary structure, belongs to the multiprotein complex Integrator, at least composed of IntS1, IntS2, IntS3, IntS4, omd/IntS5, IntS6, defl/IntS7, IntS8, IntS9, IntS10, IntS11, IntS12, asun/IntS13, IntS14 and IntS15. The core complex associates with protein phosphatase 2A subunits mts/PP2A and Pp2A-29B, to form the Integrator-PP2A (INTAC) complex.

It localises to the nucleus membrane. Its subcellular location is the nucleus. Its function is as follows. Component of the integrator complex, a multiprotein complex that terminates RNA polymerase II (Pol II) transcription in the promoter-proximal region of genes. The integrator complex provides a quality checkpoint during transcription elongation by driving premature transcription termination of transcripts that are unfavorably configured for transcriptional elongation: the complex terminates transcription by (1) catalyzing dephosphorylation of the C-terminal domain (CTD) of Pol II subunit Polr2A/Rbp1 and Spt5, and (2) degrading the exiting nascent RNA transcript via endonuclease activity. The integrator complex is also involved in the 3'-end processing of the U7 snRNA, and also the spliceosomal snRNAs U1, U2, U4 and U5. The protein is Integrator complex subunit 2 of Drosophila melanogaster (Fruit fly).